We begin with the raw amino-acid sequence, 104 residues long: Gastrin (104 aa).

The signal sequence occupies residues Met-1 to Ala-21. Residues Ser-22 to Arg-58 constitute a propeptide that is removed on maturation. The disordered stretch occupies residues Phe-27–His-67. Positions Arg-40–Arg-49 are enriched in basic and acidic residues. Gln-59 is modified (pyrrolidone carboxylic acid; in form big gastrin). Gln-76 is subject to Pyrrolidone carboxylic acid; in form gastrin. Sulfotyrosine; partial is present on Tyr-87. Phenylalanine amide is present on Phe-92. Ser-96 carries the post-translational modification Phosphoserine. A propeptide spanning residues Ser-96–Pro-104 is cleaved from the precursor.

Belongs to the gastrin/cholecystokinin family. Sulfation enhances proteolytic processing, and blocks peptide degradation. Levels of sulfation differ between proteolytically-cleaved gastrins. Thus, gastrin-6 is almost 73% sulfated, whereas the larger gastrins are less than 50% sulfated. Sulfation levels are also tissue-specific.

It localises to the secreted. Functionally, gastrin stimulates the stomach mucosa to produce and secrete hydrochloric acid and the pancreas to secrete its digestive enzymes. It also stimulates smooth muscle contraction and increases blood circulation and water secretion in the stomach and intestine. The polypeptide is Gastrin (GAST) (Sus scrofa (Pig)).